Reading from the N-terminus, the 203-residue chain is Recombination protein RecR (203 aa).

Residues 57-73 (CQSCGTLKSNSLGCNNC) form a C4-type zinc finger. The Toprim domain maps to 81-175 (NKICVVEDIA…KVTKLAQGLP (95 aa)).

It belongs to the RecR family.

Functionally, may play a role in DNA repair. It seems to be involved in an RecBC-independent recombinational process of DNA repair. It may act with RecF and RecO. The chain is Recombination protein RecR from Pelagibacter ubique (strain HTCC1062).